Consider the following 320-residue polypeptide: Cytochrome f (320 aa).

An N-terminal signal peptide occupies residues 1–35 (MQNRNTFSWVKEQMTRFISVSIMIYVITRTSISNA). Heme contacts are provided by Tyr36, Cys56, Cys59, and His60. Residues 286-306 (VQGLLFFLASVILAQIFLVLK) form a helical membrane-spanning segment.

It belongs to the cytochrome f family. The 4 large subunits of the cytochrome b6-f complex are cytochrome b6, subunit IV (17 kDa polypeptide, petD), cytochrome f and the Rieske protein, while the 4 small subunits are PetG, PetL, PetM and PetN. The complex functions as a dimer. It depends on heme as a cofactor.

It localises to the plastid. The protein resides in the chloroplast thylakoid membrane. In terms of biological role, component of the cytochrome b6-f complex, which mediates electron transfer between photosystem II (PSII) and photosystem I (PSI), cyclic electron flow around PSI, and state transitions. This is Cytochrome f from Liriodendron tulipifera (Tuliptree).